We begin with the raw amino-acid sequence, 327 residues long: MSHLAELVASAKAAISQASDVAALDNVRVEYLGKKGHLTLQMTTLRELPPEERPAAGAVINEAKEQVQQALNARKAELESAALNARLAAETIDVSLPGRRIENGGLHPVTRTIDRIESFFGELGFTVATGPEIEDDYHNFDALNIPGHHPARADHDTFWFDTTRLLRTQTSGVQIRTMKAQQPPIRIIAPGRVYRNDYDQTHTPMFHQMEGLIVDTNISFTNLKGTLHDFLRNFFEEDLQIRFRPSYFPFTEPSAEVDVMGKNGKWLEVLGCGMVHPNVLRNVGIDPEVYSGFAFGMGMERLTMLRYGVTDLRLFFENDLRFLKQFK.

Glutamate 252 contacts Mg(2+).

It belongs to the class-II aminoacyl-tRNA synthetase family. Phe-tRNA synthetase alpha subunit type 1 subfamily. As to quaternary structure, tetramer of two alpha and two beta subunits. Requires Mg(2+) as cofactor.

It is found in the cytoplasm. It catalyses the reaction tRNA(Phe) + L-phenylalanine + ATP = L-phenylalanyl-tRNA(Phe) + AMP + diphosphate + H(+). The chain is Phenylalanine--tRNA ligase alpha subunit from Shigella boydii serotype 18 (strain CDC 3083-94 / BS512).